A 252-amino-acid polypeptide reads, in one-letter code: Outer membrane protein P1 (252 aa).

Positions 1 to 23 (METTTKLAIGVSALCCLASAAFA) are cleaved as a signal peptide.

This sequence belongs to the Coxiella porin P1 (CPP1) (TC 1.B.43) family. In terms of assembly, may form trimers.

It localises to the cell outer membrane. Functionally, able to form a pore in lipid bilayers. The sequence is that of Outer membrane protein P1 (ompP1) from Coxiella burnetii (strain RSA 493 / Nine Mile phase I).